Reading from the N-terminus, the 210-residue chain is Synaptosomal-associated protein 25 (210 aa).

A disordered region spans residues 1-23; it reads MENSVENSMDPRSEQEEMQRCAD. The span at 9-20 shows a compositional bias: basic and acidic residues; the sequence is MDPRSEQEEMQR. T-SNARE coiled-coil homology domains are found at residues 23–85 and 147–209; these read DQIT…LSDL and DARE…ATKM.

It belongs to the SNAP-25 family.

It is found in the synapse. The protein localises to the synaptosome. The protein resides in the cell membrane. May play an important role in the synaptic function of specific neuronal systems. Associates with proteins involved in vesicle docking and membrane fusion. The protein is Synaptosomal-associated protein 25 (snap25) of Torpedo marmorata (Marbled electric ray).